The sequence spans 92 residues: Serine protease inhibitor I/II (92 aa).

Residues 1-19 (MKLALALCAAFLLVVLVQA) form the signal peptide. Pacifastin domains follow at residues 20 to 54 (EQEC…CPPH) and 57 to 92 (EVTC…CPQK). 6 disulfide bridges follow: Cys-23–Cys-38, Cys-33–Cys-51, Cys-36–Cys-46, Cys-60–Cys-75, Cys-70–Cys-89, and Cys-73–Cys-84.

It belongs to the protease inhibitor I19 family. In terms of tissue distribution, expressed in hemolymph, ovaries, testes and fat body of adults but are absent in the gut. Also present in larval hemolymph and fat body.

It is found in the secreted. Functionally, in vitro, is active against alpha-chymotrypsin and trypsin. In terms of biological role, in vitro, is active against alpha-chymotrypsin and pancreatic elastase. This Schistocerca gregaria (Desert locust) protein is Serine protease inhibitor I/II.